The following is a 509-amino-acid chain: ATP synthase subunit beta (509 aa).

167-174 provides a ligand contact to ATP; it reads GGAGVGKT. Positions 476 to 509 are disordered; sequence ESLGAKMEDTSGDGAPAQSDSKSDSKGDDADKDA. Basic and acidic residues predominate over residues 496–509; sequence SKSDSKGDDADKDA.

Belongs to the ATPase alpha/beta chains family. As to quaternary structure, F-type ATPases have 2 components, CF(1) - the catalytic core - and CF(0) - the membrane proton channel. CF(1) has five subunits: alpha(3), beta(3), gamma(1), delta(1), epsilon(1). CF(0) has three main subunits: a(1), b(2) and c(9-12). The alpha and beta chains form an alternating ring which encloses part of the gamma chain. CF(1) is attached to CF(0) by a central stalk formed by the gamma and epsilon chains, while a peripheral stalk is formed by the delta and b chains.

The protein resides in the cell membrane. The enzyme catalyses ATP + H2O + 4 H(+)(in) = ADP + phosphate + 5 H(+)(out). Functionally, produces ATP from ADP in the presence of a proton gradient across the membrane. The catalytic sites are hosted primarily by the beta subunits. This Mycobacterium sp. (strain KMS) protein is ATP synthase subunit beta.